A 225-amino-acid chain; its full sequence is C-reactive protein (225 aa).

The signal sequence occupies residues 1–20 (MEKLLWCFLTLVSFSNMSDQ). The Pentraxin (PTX) domain occupies 24–225 (HKKAFVFPKE…EVHVKPQLWP (202 aa)). Cys55 and Cys116 form a disulfide bridge. Ca(2+)-binding residues include Asn80, Gln158, Asp159, and Gln169.

Belongs to the pentraxin family. Homopentamer. Pentraxin (or pentaxin) have a discoid arrangement of 5 non-covalently bound subunits. Interacts with FCN1; may regulate monocyte activation by FCN1. Ca(2+) serves as cofactor. In terms of tissue distribution, found in plasma.

The protein resides in the secreted. Its function is as follows. Displays several functions associated with host defense: it promotes agglutination, bacterial capsular swelling, phagocytosis and complement fixation through its calcium-dependent binding to phosphorylcholine. Can interact with DNA and histones and may scavenge nuclear material released from damaged circulating cells. The polypeptide is C-reactive protein (CRP) (Oryctolagus cuniculus (Rabbit)).